Consider the following 207-residue polypeptide: SPRY domain-containing protein 4 (207 aa).

A B30.2/SPRY domain is found at 12–207 (YRWGTKRWGV…HSGLEVPKGL (196 aa)). An N6-acetyllysine mark is found at K53 and K130. Position 139 is an N6-succinyllysine (K139).

This chain is SPRY domain-containing protein 4 (Spryd4), found in Rattus norvegicus (Rat).